Reading from the N-terminus, the 376-residue chain is MSSLVRLKFNAIKLVIDFGISENIAYLISIFLPIVLLLVISVLGVLVTVWLERKISAAVQQRIGPEYAGSLGIMQAIVDGVKLLIKEDIIPAQGDRWLFSIGPVLVVTPVILSYLVVPFGKNIILSDIRLGIFFWIVISSITPLGLLIAGYASNNKYSLLGGLRAAAQSISYEIPLTLCVLSISLLSNTLSTSDIVEQQCKYGILSWNIWRQPVGFITFFIASLAECERLPFDLPEAEEELVAGYQTEYSGIKFGIFYVASYLNLLVSSLFAVVLYLGGWNFPIPTTLIFFISMYKVSLPLDSSNLLLELIIPIIHISITLAKTYLFIFFAILARWTLPRIRIDQLLDLGWKFLLPMAVGNLLLTASFQLTLFEFS.

9 helical membrane-spanning segments follow: residues 27-47 (LISI…GVLV), 65-85 (PEYA…KLLI), 97-117 (WLFS…YLVV), 130-150 (LGIF…LIAG), 166-186 (AAQS…ISLL), 251-271 (GIKF…SSLF), 272-292 (AVVL…IFFI), 310-330 (LIIP…FIFF), and 353-373 (FLLP…LTLF).

It belongs to the complex I subunit 1 family. In terms of assembly, NDH is composed of at least 16 different subunits, 5 of which are encoded in the nucleus.

Its subcellular location is the plastid. It localises to the chloroplast thylakoid membrane. The enzyme catalyses a plastoquinone + NADH + (n+1) H(+)(in) = a plastoquinol + NAD(+) + n H(+)(out). It carries out the reaction a plastoquinone + NADPH + (n+1) H(+)(in) = a plastoquinol + NADP(+) + n H(+)(out). Functionally, NDH shuttles electrons from NAD(P)H:plastoquinone, via FMN and iron-sulfur (Fe-S) centers, to quinones in the photosynthetic chain and possibly in a chloroplast respiratory chain. The immediate electron acceptor for the enzyme in this species is believed to be plastoquinone. Couples the redox reaction to proton translocation, and thus conserves the redox energy in a proton gradient. This Chara vulgaris (Common stonewort) protein is NAD(P)H-quinone oxidoreductase subunit 1, chloroplastic.